The sequence spans 638 residues: Plasma kallikrein (638 aa).

A signal peptide spans 1-19 (MILFKQATYFISLFATVSC). Apple domains lie at 21–104 (CLTQ…LKQC), 111–194 (CHRD…LKPC), 201–284 (CHMN…LLTC), and 292–375 (CHSK…LRLC). Intrachain disulfides connect cysteine 21–cysteine 104, cysteine 47–cysteine 77, cysteine 51–cysteine 57, cysteine 111–cysteine 194, cysteine 137–cysteine 166, cysteine 141–cysteine 147, cysteine 201–cysteine 284, cysteine 227–cysteine 256, cysteine 231–cysteine 237, cysteine 292–cysteine 375, cysteine 318–cysteine 347, cysteine 322–cysteine 328, cysteine 340–cysteine 345, cysteine 383–cysteine 503, cysteine 419–cysteine 435, cysteine 517–cysteine 584, cysteine 548–cysteine 563, and cysteine 574–cysteine 602. An N-linked (GlcNAc...) asparagine glycan is attached at asparagine 127. The N-linked (GlcNAc...) asparagine glycan is linked to asparagine 308. In terms of domain architecture, Peptidase S1 spans 391–626 (IVGGTNSSWG…YMDWILEKTQ (236 aa)). Residue asparagine 396 is glycosylated (N-linked (GlcNAc...) asparagine). Catalysis depends on histidine 434, which acts as the Charge relay system. Asparagine 453 carries an N-linked (GlcNAc...) asparagine glycan. The active-site Charge relay system is aspartate 483. A glycan (N-linked (GlcNAc...) asparagine) is linked at asparagine 494. Serine 578 functions as the Charge relay system in the catalytic mechanism.

This sequence belongs to the peptidase S1 family. Plasma kallikrein subfamily. Forms a heterodimer with SERPINA5. The zymogen is activated by factor XIIa, which cleaves the molecule into a light chain, which contains the active site, and a heavy chain, which associates with HMW kininogen. These chains are linked by one or more disulfide bonds. Interacts with iripin-3, a serine protease inhibitor from Ixodes ricinus saliva. Interacts with iripin-1, a serine protease inhibitor from Ixodes ricinus saliva. Found in plasma (at protein level).

It localises to the secreted. It catalyses the reaction Cleaves selectively Arg-|-Xaa and Lys-|-Xaa bonds, including Lys-|-Arg and Arg-|-Ser bonds in (human) kininogen to release bradykinin.. Inhibited by SERPINA5. In terms of biological role, participates in the surface-dependent activation of blood coagulation. Activates, in a reciprocal reaction, coagulation factor XII/F12 after binding to negatively charged surfaces. Releases bradykinin from HMW kininogen and may also play a role in the renin-angiotensin system by converting prorenin into renin. In Homo sapiens (Human), this protein is Plasma kallikrein (KLKB1).